The sequence spans 344 residues: Arginine N-succinyltransferase (344 aa).

Residue L125 coordinates succinyl-CoA. Catalysis depends on H229, which acts as the Proton donor.

The protein belongs to the arginine N-succinyltransferase family.

The catalysed reaction is succinyl-CoA + L-arginine = N(2)-succinyl-L-arginine + CoA + H(+). It functions in the pathway amino-acid degradation; L-arginine degradation via AST pathway; L-glutamate and succinate from L-arginine: step 1/5. Its function is as follows. Catalyzes the transfer of succinyl-CoA to arginine to produce N(2)-succinylarginine. The polypeptide is Arginine N-succinyltransferase (Shigella boydii serotype 18 (strain CDC 3083-94 / BS512)).